The sequence spans 493 residues: MTEADYADFLVVGGGTCGCVVAARLSEDPSATVMLLESGSGYRSALELPDVLGDPYRLPVGPASEYTWTYPVELTPRRASTIARGRTLGGSGAVNGAYFMRATRADFENWPSAWRYDDVLPYFKKSETDRDFESEFHGTAGPIPVERRAWDQLHPLSGEFHAAALGAGFPDDVDKNAPDSFGVGRVPLNVADHRRISTAIGYLMPALHRPNLRVESGVNVIRIVFSGTRAVGVDVLDDGNVRRIHADHVIVCSGAVATPHILLNSGVGPAEQLAEQGVSVILDRHGVGQNFVDHPEVLLPYHFSTPRAIRSQTPVLETALNLAELEIRPYTASFTDLVPGVPRMDHGVGVVLMAPRSRGSIELASGDPAGAPRIRYNYVASTHDRAANREGMQIAENLLESIAETGLIDRPVVEYTDEWVESRLGTSLHMSGSCVMGAESDPFAVVDDRCRVIGAQGLSIVDTSILPTIPTRGPHATAVMVAERASAILLGDE.

Residue 8-37 participates in FAD binding; it reads DFLVVGGGTCGCVVAARLSEDPSATVMLLE. Catalysis depends on His429, which acts as the Proton acceptor.

It belongs to the GMC oxidoreductase family. FAD serves as cofactor.

This is an uncharacterized protein from Rhodococcus erythropolis (Arthrobacter picolinophilus).